The chain runs to 199 residues: MSCGDAKLNHPAPHFNEVALMPNGTFKKVDLASYRGKWVVLFFYPLDFTFVCPTEICQFSDRVKEFNDVDCEVIACSMDSEFSHLAWTNVERKKGGLGTMNIPILADKTKSIMKAYGVLKEEDGVAYRGLFIIDPQQNLRQITINDLPVGRNVDETLRLVKAFQFVEKHGEVCPANWKPGSKTMKADPNGSQDYFSSMN.

The Thioredoxin domain occupies 6 to 165; it reads AKLNHPAPHF…TLRLVKAFQF (160 aa). C52 serves as the catalytic Cysteine sulfenic acid (-SOH) intermediate. The segment at 179 to 199 is disordered; the sequence is PGSKTMKADPNGSQDYFSSMN. Polar residues predominate over residues 189 to 199; sequence NGSQDYFSSMN.

It belongs to the peroxiredoxin family. AhpC/Prx1 subfamily. As to quaternary structure, homodimer; disulfide-linked, upon oxidation.

It carries out the reaction a hydroperoxide + [thioredoxin]-dithiol = an alcohol + [thioredoxin]-disulfide + H2O. Functionally, thiol-specific peroxidase that catalyzes the reduction of hydrogen peroxide and organic hydroperoxides to water and alcohols, respectively. Plays a role in cell protection against oxidative stress by detoxifying peroxides and as sensor of hydrogen peroxide-mediated signaling events. This chain is Thioredoxin peroxidase, found in Trypanosoma brucei rhodesiense.